The primary structure comprises 290 residues: Cilia- and flagella-associated protein 298-A (290 aa).

The protein belongs to the CFAP298 family.

It is found in the cytoplasm. It localises to the cytoskeleton. The protein resides in the cilium basal body. Its function is as follows. Plays a role in motile cilium function, possibly by acting on outer dynein arm assembly. Seems to be important for initiation rather than maintenance of cilium motility. Required for correct positioning of the cilium at the apical cell surface, suggesting an additional role in the planar cell polarity (PCP) pathway. May suppress canonical Wnt signaling activity. The sequence is that of Cilia- and flagella-associated protein 298-A (cfap298-a) from Xenopus laevis (African clawed frog).